The sequence spans 74 residues: Kappa-stichotoxin-Shd5a (74 aa).

Residues 1-22 (MKFQVIAAVLLIAFCLCVVVTA) form the signal peptide. A propeptide spanning residues 23 to 39 (RMELQDVEDVENGFQKR) is cleaved from the precursor. The ShKT domain maps to 42 to 74 (CIDTIPQSRCTAFQCKHSMKYRLSFCRKTCGTC). 3 disulfides stabilise this stretch: Cys42/Cys74, Cys51/Cys67, and Cys56/Cys71.

This sequence belongs to the sea anemone type 1 potassium channel toxin family. Type 1a subfamily.

Its subcellular location is the secreted. It is found in the nematocyst. Its function is as follows. Inhibits voltage-gated potassium channels (Kv) with higher potency for Kv1.1/KCNA1 and Kv1.3/KCNA3. This Stichodactyla haddoni (Saddle carpet anemone) protein is Kappa-stichotoxin-Shd5a.